Reading from the N-terminus, the 371-residue chain is Putative glutamate--cysteine ligase 2 (371 aa).

It belongs to the glutamate--cysteine ligase type 2 family. YbdK subfamily. In terms of assembly, homodimer.

The enzyme catalyses L-cysteine + L-glutamate + ATP = gamma-L-glutamyl-L-cysteine + ADP + phosphate + H(+). Its function is as follows. ATP-dependent carboxylate-amine ligase which exhibits weak glutamate--cysteine ligase activity. The chain is Putative glutamate--cysteine ligase 2 from Klebsiella pneumoniae (strain 342).